We begin with the raw amino-acid sequence, 333 residues long: 5-formaminoimidazole-4-carboxamide-1-(beta)-D-ribofuranosyl 5'-monophosphate synthetase (333 aa).

Residues His-10 and Ser-74 each coordinate 5-amino-1-(5-phospho-beta-D-ribosyl)imidazole-4-carboxamide. The ATP-grasp domain maps to 95–324 (RNLFAWESNQ…ISREIRLALN (230 aa)). ATP is bound by residues 125-185 (VEDV…VPMY) and Glu-207. Asn-230 provides a ligand contact to 5-amino-1-(5-phospho-beta-D-ribosyl)imidazole-4-carboxamide. Mg(2+) contacts are provided by Glu-269 and Glu-282.

It belongs to the phosphohexose mutase family. The cofactor is Mg(2+). Mn(2+) serves as cofactor.

The catalysed reaction is 5-amino-1-(5-phospho-beta-D-ribosyl)imidazole-4-carboxamide + formate + ATP = 5-formamido-1-(5-phospho-D-ribosyl)imidazole-4-carboxamide + ADP + phosphate. It participates in purine metabolism; IMP biosynthesis via de novo pathway; 5-formamido-1-(5-phospho-D-ribosyl)imidazole-4-carboxamide from 5-amino-1-(5-phospho-D-ribosyl)imidazole-4-carboxamide (formate route): step 1/1. Functionally, catalyzes the ATP- and formate-dependent formylation of 5-aminoimidazole-4-carboxamide-1-beta-d-ribofuranosyl 5'-monophosphate (AICAR) to 5-formaminoimidazole-4-carboxamide-1-beta-d-ribofuranosyl 5'-monophosphate (FAICAR) in the absence of folates. This Sulfolobus acidocaldarius (strain ATCC 33909 / DSM 639 / JCM 8929 / NBRC 15157 / NCIMB 11770) protein is 5-formaminoimidazole-4-carboxamide-1-(beta)-D-ribofuranosyl 5'-monophosphate synthetase.